The primary structure comprises 598 residues: Probable translation initiation factor IF-2 (598 aa).

One can recognise a tr-type G domain in the interval I8–E226. Residues G17–T24 are G1. G17–T24 serves as a coordination point for GTP. Residues G42–H46 are G2. The tract at residues D81–G84 is G3. GTP-binding positions include D81–H85 and N135–D138. The interval N135–D138 is G4. Positions S203–V205 are G5.

Belongs to the TRAFAC class translation factor GTPase superfamily. Classic translation factor GTPase family. IF-2 subfamily.

Functionally, function in general translation initiation by promoting the binding of the formylmethionine-tRNA to ribosomes. Seems to function along with eIF-2. The chain is Probable translation initiation factor IF-2 from Methanopyrus kandleri (strain AV19 / DSM 6324 / JCM 9639 / NBRC 100938).